A 273-amino-acid chain; its full sequence is E3 ubiquitin-protein ligase SDIR1 (273 aa).

Residues 1–33 (MSFVFRGSRGDLESGFSGGFLPERRAMRVHGAR) are Cytoplasmic-facing. A helical membrane pass occupies residues 34–54 (PVNSNSLAFLVTVLLLFMILN). The Lumenal portion of the chain corresponds to 55 to 56 (SH). Residues 57–77 (QMPPNFLLWLVLGVFLMATTL) traverse the membrane as a helical segment. The Cytoplasmic segment spans residues 78-273 (RMYATCQQLQ…EIDDDASDMV (196 aa)). An RING-type; atypical zinc finger spans residues 211–252 (CSVCLEQVTVGEIVRTLPCLHQFHAGCIDPWLRQQGTCPVCK).

Interacts with ATP1/SDIRIP1. In terms of tissue distribution, ubiquitous.

It localises to the endoplasmic reticulum membrane. The enzyme catalyses S-ubiquitinyl-[E2 ubiquitin-conjugating enzyme]-L-cysteine + [acceptor protein]-L-lysine = [E2 ubiquitin-conjugating enzyme]-L-cysteine + N(6)-ubiquitinyl-[acceptor protein]-L-lysine.. E3 ubiquitin-protein ligase that acts as a positive regulator of abscisic acid-related stress signal transduction. Interacts with and ubiquitinates ATP1/SDIRIP1 to modulate ATP1/SDIRIP1 stability through the 26S proteasome pathway. Regulates abscisic acid (ABA) and salt stress responses by negatively affecting ATP1/SDIRIP1 stability. The SDIR1-ATP1/SDIRIP1 complex plays an important role in ABA signaling through the ubiquitination pathway. This chain is E3 ubiquitin-protein ligase SDIR1, found in Arabidopsis thaliana (Mouse-ear cress).